We begin with the raw amino-acid sequence, 458 residues long: Zinc finger protein 239 (458 aa).

Lys108 is covalently cross-linked (Glycyl lysine isopeptide (Lys-Gly) (interchain with G-Cter in SUMO2)). A Phosphoserine modification is found at Ser191. 9 consecutive C2H2-type zinc fingers follow at residues 207–229 (YECS…QRDH), 235–257 (YKCE…QAVH), 263–285 (YKCD…HAVH), 291–313 (YKCD…QRVH), 319–341 (YECE…QRVH), 347–369 (YKCG…RCIH), 375–397 (YQCY…LRVH), 403–425 (YHCG…QRVH), and 431–453 (YECS…QRVH).

It belongs to the krueppel C2H2-type zinc-finger protein family.

It is found in the nucleus. In terms of biological role, may be involved in transcriptional regulation. The sequence is that of Zinc finger protein 239 (ZNF239) from Pongo abelii (Sumatran orangutan).